Consider the following 194-residue polypeptide: Small ribosomal subunit protein uS5 (194 aa).

The S5 DRBM domain maps to 26-89 (LEEKVVEIRR…ADAKKRIIKV (64 aa)).

Belongs to the universal ribosomal protein uS5 family. In terms of assembly, part of the 30S ribosomal subunit. Contacts proteins S4 and S8.

Its function is as follows. With S4 and S12 plays an important role in translational accuracy. In terms of biological role, located at the back of the 30S subunit body where it stabilizes the conformation of the head with respect to the body. In Sulfurihydrogenibium sp. (strain YO3AOP1), this protein is Small ribosomal subunit protein uS5.